The following is a 250-amino-acid chain: Sugar fermentation stimulation protein homolog (250 aa).

The protein belongs to the SfsA family.

This chain is Sugar fermentation stimulation protein homolog, found in Synechococcus sp. (strain CC9311).